A 315-amino-acid chain; its full sequence is MKFKHKSVLLHETIDNLNPKDDGLYVDATFGGGGHARYLLSKLNRGTVIGFDQDEYAISMAKESFAEELKPGAEPKLILVHDNFCHLKENLVELGISDGIDGIYYDLGVSSPQFDQPERGFSYRFDARLDMRMDQSQELDAYTIVNTWSQKELSDILYKYGDEKFSRQIARKIVDRRREKPIVTTFDLVDVIKDAIPAYARRSGGHPAKKSFQAIRVAVNNELGVLQESLEEAIKLLKPGGRISVITFQSHEDKIVKKIFKKYSEVEIPRGMPMIPADSKPTLRLISRKPIMASSDELEENNRSHSAKLRVAEKL.

S-adenosyl-L-methionine is bound by residues 33–35 (GGH), aspartate 52, phenylalanine 84, aspartate 106, and glutamine 113. A disordered region spans residues 295 to 315 (SDELEENNRSHSAKLRVAEKL).

This sequence belongs to the methyltransferase superfamily. RsmH family.

The protein resides in the cytoplasm. It catalyses the reaction cytidine(1402) in 16S rRNA + S-adenosyl-L-methionine = N(4)-methylcytidine(1402) in 16S rRNA + S-adenosyl-L-homocysteine + H(+). In terms of biological role, specifically methylates the N4 position of cytidine in position 1402 (C1402) of 16S rRNA. This chain is Ribosomal RNA small subunit methyltransferase H, found in Lactobacillus gasseri (strain ATCC 33323 / DSM 20243 / BCRC 14619 / CIP 102991 / JCM 1131 / KCTC 3163 / NCIMB 11718 / NCTC 13722 / AM63).